A 49-amino-acid polypeptide reads, in one-letter code: Large ribosomal subunit protein bL33B (49 aa).

The protein belongs to the bacterial ribosomal protein bL33 family.

Plays a role in sporulation at high temperatures. This Bacillus subtilis (strain 168) protein is Large ribosomal subunit protein bL33B (rpmGB).